The following is a 423-amino-acid chain: Zinc finger protein Gfi-1 (423 aa).

The SNAG domain stretch occupies residues 1–20 (MPRSFLVKSKKAHSYHQPRS). A disordered region spans residues 1–76 (MPRSFLVKSK…DRASASPNSC (76 aa)). Phosphoserine occurs at positions 20 and 57. Basic and acidic residues predominate over residues 48 to 57 (SKMEPRERLS). The required for interaction with RELA stretch occupies residues 141–258 (RQCSALERSA…LLLGGGSYKC (118 aa)). 6 consecutive C2H2-type zinc fingers follow at residues 256-279 (YKCIKCSKVFSTPHGLEVHVRRSH), 285-307 (FACEMCGKTFGHAVSLEQHKAVH), 313-335 (FDCKICGKSFKRSSTLSTHLLIH), 341-363 (YPCQYCGKRFHQKSDMKKHTFIH), 369-391 (HKCQVCGKAFSQSSNLITHSRKH), and 397-420 (FGCDLCGKGFQRKVDLRRHRETQH).

As to quaternary structure, interacts (via the zinc-finger domain) with ARIH2; the interaction prevents GFI1 ubiquitination and proteasomal degradation. Forms a complex with EHMT2 and HDAC1 to promote 'Lys-9' dimethylation of H3 (H3K9Me2) and repress expression of target genes. Interacts directly with EHMT2. Interacts with RUNX1T1; the interaction represses HDAC-mediated transcriptional activity. Interacts (via the C-terminal zinc fingers) with ZBTB17; the interaction results in the recruitment of GFI1 to the CDKN1A/p21 and CDKNIB promoters and repression of transcription. Interacts with U2AF1L4. Component of RCOR-GFI-KDM1A-HDAC complexes. Interacts directly with RCOR1, KDM1A and HDAC2. Also interacts with HDAC1. Component of the GFI1-AJUBA-HDAC1 repressor complex. Interacts directly with AJUBA (via its LIM domains); the interaction results in the HDAC-dependent corepression of a subset of GFI1 target genes and, occurs independently of the SNAG domain. Interacts with SPI1; the interaction inhibits SPI1 transcriptional activity targeted at macrophage-specific genes, repressing macrophage differentiation of myeloid progenitor cells and promoting granulocyte commitment. Interacts with PIAS3; the interaction relieves the inhibitory effect of PIAS3 on STAT3-mediated transcriptional activity. Interacts with RELA; the interaction occurs on liposaccharide (LPS) stimulation and controls RELA DNA binding activity and regulates endotoxin-mediated TOLL-like receptor inflammatory response. In terms of processing, ubiquitinated.

It is found in the nucleus. Its function is as follows. Transcription repressor essential for hematopoiesis. Functions in a cell-context and development-specific manner. Binds to 5'-TAAATCAC[AT]GCA-3' in the promoter region of a large number of genes. Component of several complexes, including the EHMT2-GFI1-HDAC1, AJUBA-GFI1-HDAC1 and RCOR-GFI-KDM1A-HDAC complexes, that suppress, via histone deacetylase (HDAC) recruitment, a number of genes implicated in multilineage blood cell development. Regulates neutrophil differentiation, promotes proliferation of lymphoid cells, and is required for granulocyte development. Inhibits SPI1 transcriptional activity at macrophage-specific genes, repressing macrophage differentiation of myeloid progenitor cells and promoting granulocyte commitment. Mediates, together with U2AF1L4, the alternative splicing of CD45 and controls T-cell receptor signaling. Regulates the endotoxin-mediated Toll-like receptor (TLR) inflammatory response by antagonizing RELA. Cooperates with CBFA2T2 to regulate ITGB1-dependent neurite growth. Controls cell-cycle progression by repressing CDKNIA/p21 transcription in response to TGFB1 via recruitment of GFI1 by ZBTB17 to the CDKNIA/p21 and CDKNIB promoters. Required for the maintenance of inner ear hair cells. In addition to its role in transcription, acts as a substrate adapter for PRMT1 in the DNA damage response. Facilitates the recognition of TP53BP1 and MRE11 substrates by PRMT1, promoting their methylation and the DNA damage response. In Mus musculus (Mouse), this protein is Zinc finger protein Gfi-1 (Gfi1).